The chain runs to 446 residues: Glucose-6-phosphate isomerase (446 aa).

The Proton donor role is filled by glutamate 288. Catalysis depends on residues histidine 309 and lysine 423.

It belongs to the GPI family.

The protein resides in the cytoplasm. The catalysed reaction is alpha-D-glucose 6-phosphate = beta-D-fructose 6-phosphate. It participates in carbohydrate biosynthesis; gluconeogenesis. Its pathway is carbohydrate degradation; glycolysis; D-glyceraldehyde 3-phosphate and glycerone phosphate from D-glucose: step 2/4. Its function is as follows. Catalyzes the reversible isomerization of glucose-6-phosphate to fructose-6-phosphate. This is Glucose-6-phosphate isomerase from Lacticaseibacillus casei (strain BL23) (Lactobacillus casei).